A 246-amino-acid chain; its full sequence is tRNA (guanine-N(7)-)-methyltransferase (246 aa).

Positions 1–26 (MSDSSSSSENAPATPESPGRPPRGIK) are disordered. Residues Glu-74, Glu-99, Asp-126, and Asp-149 each contribute to the S-adenosyl-L-methionine site. Asp-149 is an active-site residue. Residues Lys-153, Asp-185, and 224–227 (TKFE) each bind substrate.

It belongs to the class I-like SAM-binding methyltransferase superfamily. TrmB family.

It catalyses the reaction guanosine(46) in tRNA + S-adenosyl-L-methionine = N(7)-methylguanosine(46) in tRNA + S-adenosyl-L-homocysteine. Its pathway is tRNA modification; N(7)-methylguanine-tRNA biosynthesis. Its function is as follows. Catalyzes the formation of N(7)-methylguanine at position 46 (m7G46) in tRNA. The polypeptide is tRNA (guanine-N(7)-)-methyltransferase (Chromohalobacter salexigens (strain ATCC BAA-138 / DSM 3043 / CIP 106854 / NCIMB 13768 / 1H11)).